Consider the following 116-residue polypeptide: MGLPLTFDDNNQCLLLLDSDIFTSIEAKDDIWLLNGMIIPLSPVCGDSIWRQIMVINGELAANNEGTLAYIDAAETLLFIHAITDLTNIYHIISQLESFVNKQEALKNILQEYAKV.

It belongs to the SicP family.

Its subcellular location is the cytoplasm. Molecular chaperone required for SptP stabilization and secretion. In Salmonella paratyphi A (strain ATCC 9150 / SARB42), this protein is Chaperone protein SicP (sicP).